A 266-amino-acid polypeptide reads, in one-letter code: 15-hydroxyprostaglandin dehydrogenase [NAD(+)] (266 aa).

Residues 12–20 (GAAQGIGRA), 36–37 (DW), 63–65 (CDV), and Asn-91 each bind NAD(+). 2 residues coordinate substrate: Ser-138 and Gln-148. Residue Tyr-151 is the Proton acceptor of the active site. Residues 151-155 (YCASK) and 186-188 (VNT) contribute to the NAD(+) site.

The protein belongs to the short-chain dehydrogenases/reductases (SDR) family. In terms of assembly, homodimer. Detected in colon epithelium (at protein level).

The protein localises to the cytoplasm. It carries out the reaction prostaglandin E2 + NAD(+) = 15-oxoprostaglandin E2 + NADH + H(+). The enzyme catalyses (15S)-hydroxy-(5Z,8Z,11Z,13E)-eicosatetraenoate + NAD(+) = 15-oxo-(5Z,8Z,11Z,13E)-eicosatetraenoate + NADH + H(+). It catalyses the reaction (11R)-hydroxy-(5Z,8Z,12E,14Z)-eicosatetraenoate + NAD(+) = 11-oxo-(5Z,8Z,12E,14Z)-eicosatetraenoate + NADH + H(+). The catalysed reaction is lipoxin A4 + NAD(+) = 15-oxo-(5S,6R)-dihydroxy-(7E,9E,11Z,13E)-eicosatetraenoate + NADH + H(+). It carries out the reaction 15-oxo-(5S,6R)-dihydroxy-(7E,9E,11Z)-eicosatrienoate + NADH + H(+) = (5S,6R,15S)-trihydroxy-(7E,9E,11Z)-eicosatrienoate + NAD(+). The enzyme catalyses prostaglandin A1 + NAD(+) = 15-oxo-prostaglandin A1 + NADH + H(+). It catalyses the reaction prostaglandin E1 + NAD(+) = 15-oxoprostaglandin E1 + NADH + H(+). The catalysed reaction is 14-hydroxy-(4Z,7Z,10Z,12E,16Z,19Z)-docosahexaenoate + NAD(+) = 14-oxo-(4Z,7Z,10Z,12E,16Z,19Z)-docosahexaenoate + NADH + H(+). It carries out the reaction resolvin E1 + NAD(+) = 18-oxo-resolvin E1 + NADH + H(+). The enzyme catalyses resolvin D1 + NAD(+) = 8-oxoresolvin D1 + NADH + H(+). It catalyses the reaction resolvin D1 + NAD(+) = 17-oxoresolvin D1 + NADH + H(+). The catalysed reaction is resolvin D2 + NAD(+) = 7-oxoresolvin D2 + NADH + H(+). It carries out the reaction resolvin D2 + NAD(+) = 16-oxoresolvin D2 + NADH + H(+). Functionally, catalyzes the NAD-dependent dehydrogenation (oxidation) of a broad array of hydroxylated polyunsaturated fatty acids (mainly eicosanoids and docosanoids, including prostaglandins, lipoxins and resolvins), yielding their corresponding keto (oxo) metabolites. Decreases the levels of the pro-proliferative prostaglandins such as prostaglandin E2 (whose activity is increased in cancer because of an increase in the expression of cyclooxygenase 2) and generates oxo-fatty acid products that can profoundly influence cell function by abrogating pro-inflammatory cytokine expression. Converts resolvins E1, D1 and D2 to their oxo products, which represents a mode of resolvin inactivation. Resolvin E1 plays important roles during the resolution phase of acute inflammation, while resolvins D1 and D2 have a unique role in obesity-induced adipose inflammation. The protein is 15-hydroxyprostaglandin dehydrogenase [NAD(+)] of Homo sapiens (Human).